The chain runs to 338 residues: Protein SGT1 homolog (338 aa).

Ala2 is subject to N-acetylalanine. TPR repeat units follow at residues 11-45, 46-79, and 80-113; these read AASR…KPDD, APYY…NPNS, and STAL…NSAD. Positions 142 to 231 constitute a CS domain; that stretch reads QSKIKYDWYQ…PEAVRWEKLE (90 aa). The SGS domain maps to 249-338; sequence LYPSSSHYTR…PPDDMEWKKY (90 aa). Ser254 carries the phosphoserine modification. Thr257 carries the post-translational modification Phosphothreonine. Lys268 is covalently cross-linked (Glycyl lysine isopeptide (Lys-Gly) (interchain with G-Cter in SUMO1); alternate). A Glycyl lysine isopeptide (Lys-Gly) (interchain with G-Cter in SUMO2); alternate cross-link involves residue Lys268. Ser304 bears the Phosphoserine mark.

Belongs to the SGT1 family. Probably associates with SCF (SKP1-CUL1-F-box protein) complex through interaction with SKP1. Interacts with S100A6. Interacts with HSP90. Post-translationally, phosphorylated at Ser-254 and Ser-304, dephosphorylation promotes nuclear translocation, most likely due to disruption of the SUGT1-HSP90 complex.

Its subcellular location is the cytoplasm. The protein resides in the nucleus. In terms of biological role, may play a role in ubiquitination and subsequent proteasomal degradation of target proteins. The chain is Protein SGT1 homolog from Bos taurus (Bovine).